Consider the following 431-residue polypeptide: Adenylosuccinate synthetase (431 aa).

GTP-binding positions include 12-18 (GDEGKGK) and 40-42 (GHT). D13 functions as the Proton acceptor in the catalytic mechanism. Mg(2+)-binding residues include D13 and G40. Residues 13 to 16 (DEGK), 38 to 41 (NAGH), T128, R142, Q225, T240, and R304 each bind IMP. Residue H41 is the Proton donor of the active site. 300–306 (TTTGRPR) serves as a coordination point for substrate. GTP contacts are provided by residues R306, 332–334 (KLD), and 414–416 (GVG).

The protein belongs to the adenylosuccinate synthetase family. Homodimer. Mg(2+) serves as cofactor.

The protein localises to the cytoplasm. It catalyses the reaction IMP + L-aspartate + GTP = N(6)-(1,2-dicarboxyethyl)-AMP + GDP + phosphate + 2 H(+). Its pathway is purine metabolism; AMP biosynthesis via de novo pathway; AMP from IMP: step 1/2. Functionally, plays an important role in the de novo pathway of purine nucleotide biosynthesis. Catalyzes the first committed step in the biosynthesis of AMP from IMP. The protein is Adenylosuccinate synthetase of Thermomicrobium roseum (strain ATCC 27502 / DSM 5159 / P-2).